We begin with the raw amino-acid sequence, 172 residues long: Myosin regulatory light chain (172 aa).

T17 is modified (phosphothreonine). S18 carries the phosphoserine modification. EF-hand domains follow at residues A27–E62, D98–R133, and Y134–D168. Residues D40, N42, D44, and D51 each contribute to the Ca(2+) site.

In terms of assembly, myosin is a hexamer of 2 heavy chains and 4 light chains (two regulatory light chains and two essential light chains). In terms of processing, may be phosphorylated by let-502 or/and pak-1 and dephosphorylated by mel-11 to regulate its activation and myosin II-mediated contraction. As to expression, expressed in the spermathecal and uterine walls. Weak expression in gonadal sheath and intestinal muscle. Not detected in vulval, pharyngeal or body wall muscles.

It localises to the cytoplasm. The protein localises to the cytoskeleton. In terms of biological role, regulates myosin II activity and organization during embryo elongation. May be involved in the organization of mlc-5 into bundles. Required maternally for cytokinesis during meiosis and mitosis in the early embryo and for the establishment of embryonic anterior-posterior polarity. The protein is Myosin regulatory light chain of Caenorhabditis elegans.